We begin with the raw amino-acid sequence, 231 residues long: Membrane protein YknW (231 aa).

Transmembrane regions (helical) follow at residues 38 to 58 (VWGPLLIVAAIIIVGAVLQSL), 93 to 113 (GAIIGGIAALFIAPLIYWLCV), 128 to 148 (LSLFVSLISSLGLLVNGIVAF), 171 to 191 (LASVLNTFEIFSIWSFVLLAI), and 205 to 225 (WISAIILFGILVVFSLFSGLI).

In terms of assembly, interacts with a complex composed of YknX, YknY and YknZ.

Its subcellular location is the cell membrane. Functionally, part of an unusual four-component transporter, which is required for protection against the killing factor SdpC (sporulation-delaying protein). Has a role in the assembly of the YknXYZ complex. This chain is Membrane protein YknW (yknW), found in Bacillus subtilis (strain 168).